We begin with the raw amino-acid sequence, 180 residues long: Inner membrane-spanning protein YciB (180 aa).

5 helical membrane-spanning segments follow: residues 22–42 (IFVA…FTWF), 50–70 (MTLV…AFHS), 72–92 (LFIK…LLVS), 121–141 (MSWA…AFWL), and 149–169 (FKVF…GVYI).

This sequence belongs to the YciB family.

It is found in the cell inner membrane. Plays a role in cell envelope biogenesis, maintenance of cell envelope integrity and membrane homeostasis. This Yersinia enterocolitica serotype O:8 / biotype 1B (strain NCTC 13174 / 8081) protein is Inner membrane-spanning protein YciB.